The following is a 584-amino-acid chain: UBX domain-containing protein 2 (584 aa).

Residues 1-80 are Cytoplasmic-facing; sequence MPVVNHEDSE…PTQTSTPMAE (80 aa). A helical transmembrane segment spans residues 81–101; that stretch reads TLVPPALGPRPLLFTASLPVV. At 102-151 the chain is on the lumenal side; it reads RPLPANFRNDFRTIGLNGRSNTVWSMFESFSYDGNPFLFILLLIPRIINR. Residues 152–172 traverse the membrane as a helical segment; it reads LSATIFTFFCTLLSLHSISGG. Residues 173 to 584 are Cytoplasmic-facing; it reads GNSGKPKISK…DEEDEENEEQ (412 aa). A UBX domain is found at 426 to 570; the sequence is ETTGKQATLQ…WPNGSLLVEA (145 aa).

In terms of assembly, component of the DOA10 ubiquitin ligase complex which contains E3 ligase SSM4/DOA10 and CDC48-binding protein UBX2/SEL1. Component of the HRD1 ubiquitin ligase complex which contains the E3 ligase HRD1, its cofactors HRD3, USA1 and DER1, substrate recruiting factor YOS9 and UBX2. In ERAD-L, HRD3 and YOS9 jointly bind misfolded glycoproteins in the endoplasmic reticulum (ER) lumen. Movement of ERAD-L substrates through the ER membrane is facilitated by HRD1 and DER1 which have lateral gates facing each other and which distort the membrane region between the lateral gates, making it much thinner than a normal phospholipid bilayer. Substrates insert into the membrane as a hairpin loop with one strand interacting with DER1 and the other with HRD1. Both the DOA10 and HRD1 ubiquitin ligase complexes interact with the heterotrimeric CDC48-NPL4-UFD1 ATPase complex which is recruited by UBX2 via its interaction with CDC48 and which moves ubiquitinated substrates to the cytosol for targeting to the proteasome.

Its subcellular location is the endoplasmic reticulum membrane. In terms of biological role, integral endoplasmic reticulum membrane protein that coordinates the assembly of the ER-associated protein degradation (ERAD) machinery at the ER membrane. Mediates binding of CDC48 to the E3 ubiquitin ligases SSM4/DOA10 and HRD1, and to ERAD substrates. Component of the DOA10 ubiquitin ligase complex, which is part of the ERAD-C pathway responsible for the rapid degradation of membrane proteins with misfolded cytoplasmic domains. ERAD-C substrates are ubiquitinated through DOA10 in conjunction with the E2 ubiquitin-conjugating enzymes UBC6 and UBC7-CUE1. Also a component of the HRD1 ubiquitin ligase complex, which is part of the ERAD-L and ERAD-M pathways responsible for the rapid degradation of soluble lumenal and membrane proteins with misfolded lumenal domains (ERAD-L), or ER-membrane proteins with misfolded transmembrane domains (ERAD-M). ERAD-L substrates are ubiquitinated through HRD1 in conjunction with the E2 ubiquitin-conjugating enzymes UBC1 and UBC7-CUE1. Ubiquitinated substrates are then removed to the cytosol via the action of the CDC48-NPL4-UFD1 ATPase complex and targeted to the proteasome. The polypeptide is UBX domain-containing protein 2 (UBX2) (Saccharomyces cerevisiae (strain ATCC 204508 / S288c) (Baker's yeast)).